A 409-amino-acid polypeptide reads, in one-letter code: Phosphopentomutase (409 aa).

Mn(2+) is bound by residues Asp10, Asp302, His307, Asp343, His344, and His355.

It belongs to the phosphopentomutase family. Mn(2+) is required as a cofactor.

It localises to the cytoplasm. The enzyme catalyses 2-deoxy-alpha-D-ribose 1-phosphate = 2-deoxy-D-ribose 5-phosphate. The catalysed reaction is alpha-D-ribose 1-phosphate = D-ribose 5-phosphate. It participates in carbohydrate degradation; 2-deoxy-D-ribose 1-phosphate degradation; D-glyceraldehyde 3-phosphate and acetaldehyde from 2-deoxy-alpha-D-ribose 1-phosphate: step 1/2. Functionally, isomerase that catalyzes the conversion of deoxy-ribose 1-phosphate (dRib-1-P) and ribose 1-phosphate (Rib-1-P) to deoxy-ribose 5-phosphate (dRib-5-P) and ribose 5-phosphate (Rib-5-P), respectively. In Chelativorans sp. (strain BNC1), this protein is Phosphopentomutase.